Reading from the N-terminus, the 184-residue chain is Signal peptidase I S (184 aa).

The Cytoplasmic portion of the chain corresponds to 1 to 18 (MKSENVSKKKSILEWAKA). The helical transmembrane segment at 19–39 (IVIAVVLALLIRNFIFAPYVV) threads the bilayer. Residues 40 to 184 (DGDSMYPTLH…YPFNEMRKTN (145 aa)) lie on the Extracellular side of the membrane. Residues serine 43 and lysine 83 contribute to the active site.

This sequence belongs to the peptidase S26 family.

Its subcellular location is the cell membrane. It catalyses the reaction Cleavage of hydrophobic, N-terminal signal or leader sequences from secreted and periplasmic proteins.. Functionally, not essential for cell viability, but required for efficient secretion of many proteins. This chain is Signal peptidase I S (sipS), found in Bacillus subtilis (strain 168).